The chain runs to 372 residues: Lipid-A-disaccharide synthase (372 aa).

Belongs to the LpxB family.

It carries out the reaction a lipid X + a UDP-2-N,3-O-bis[(3R)-3-hydroxyacyl]-alpha-D-glucosamine = a lipid A disaccharide + UDP + H(+). Its pathway is bacterial outer membrane biogenesis; LPS lipid A biosynthesis. In terms of biological role, condensation of UDP-2,3-diacylglucosamine and 2,3-diacylglucosamine-1-phosphate to form lipid A disaccharide, a precursor of lipid A, a phosphorylated glycolipid that anchors the lipopolysaccharide to the outer membrane of the cell. This chain is Lipid-A-disaccharide synthase, found in Thiobacillus denitrificans (strain ATCC 25259 / T1).